Reading from the N-terminus, the 31-residue chain is Antifungal protein 1 (31 aa).

It is found in the secreted. Its function is as follows. Antifungal activity against C.albicans ATCC 76615. The sequence is that of Antifungal protein 1 from Musca domestica (House fly).